A 422-amino-acid polypeptide reads, in one-letter code: Serine hydroxymethyltransferase (422 aa).

Residues Leu-118 and 122–124 (GHL) each bind (6S)-5,6,7,8-tetrahydrofolate. Lys-227 is subject to N6-(pyridoxal phosphate)lysine. Residue Glu-242 coordinates (6S)-5,6,7,8-tetrahydrofolate.

The protein belongs to the SHMT family. As to quaternary structure, homodimer. Requires pyridoxal 5'-phosphate as cofactor.

The protein resides in the cytoplasm. It carries out the reaction (6R)-5,10-methylene-5,6,7,8-tetrahydrofolate + glycine + H2O = (6S)-5,6,7,8-tetrahydrofolate + L-serine. It participates in one-carbon metabolism; tetrahydrofolate interconversion. Its pathway is amino-acid biosynthesis; glycine biosynthesis; glycine from L-serine: step 1/1. Its function is as follows. Catalyzes the reversible interconversion of serine and glycine with tetrahydrofolate (THF) serving as the one-carbon carrier. This reaction serves as the major source of one-carbon groups required for the biosynthesis of purines, thymidylate, methionine, and other important biomolecules. Also exhibits THF-independent aldolase activity toward beta-hydroxyamino acids, producing glycine and aldehydes, via a retro-aldol mechanism. This Sulfurihydrogenibium sp. (strain YO3AOP1) protein is Serine hydroxymethyltransferase.